Reading from the N-terminus, the 270-residue chain is Bacterial microcompartment shell protein PduB (270 aa).

BMC circularly permuted domains follow at residues 47-152 and 154-262; these read EFVG…DRTF and DVYA…GSEP.

This sequence belongs to the EutL/PduB family. Homotrimerizes to form a pseudohexamer with a central pore. The trimers pack into an array. Both forms interact with shell protein PduA. In purified BMCs seen as a 30.0 kDa and 25.0 kDa form; the smaller form is called PduB'.

Its subcellular location is the bacterial microcompartment. The protein operates within polyol metabolism; 1,2-propanediol degradation. The two proteins produced are among the major shell proteins of the bacterial microcompartment (BMC) shell dedicated to 1,2-propanediol (1,2-PD) degradation. Overexpression of the gene gives large amorphous intracellular structures; when only PduB is overexpressed large circular bodies are observed which contain concentric rings, whereas with PduB' overexpression internal bodies with regular straight-lined structures were generated. The N-terminus of the long form (PduB) is required for correct formation of BMCs. May play a major role in binding the enzyme contents to the shell. Functionally, expression of a cosmid containing the full 21-gene pdu operon in E.coli allows E.coli to grow on 1,2-propanediol (1,2-PD) with the appearance of BMCs in its cytoplasm. Its function is as follows. The 1,2-PD-specific bacterial microcompartment (BMC) concentrates low levels of 1,2-PD catabolic enzymes, concentrates volatile reaction intermediates thus enhancing pathway flux and keeps the level of toxic, mutagenic propionaldehyde low. In Citrobacter freundii, this protein is Bacterial microcompartment shell protein PduB.